The following is a 146-amino-acid chain: Large ribosomal subunit protein uL15 (146 aa).

The tract at residues 1 to 54 (MTIKLHDLRPAPGSKTPRTRVGRGEGSKGKTAGRGTKGTKARKQVPTTFEGGQM) is disordered.

This sequence belongs to the universal ribosomal protein uL15 family. Part of the 50S ribosomal subunit.

Binds to the 23S rRNA. This is Large ribosomal subunit protein uL15 from Mycobacterium marinum (strain ATCC BAA-535 / M).